We begin with the raw amino-acid sequence, 65 residues long: Antimicrobial peptide 1 (65 aa).

The first 27 residues, 1–27 (MAKVSSAYLKFALVMILLLSVISAVMS), serve as a signal peptide directing secretion. Intrachain disulfides connect cysteine 30-cysteine 47, cysteine 37-cysteine 51, and cysteine 46-cysteine 62.

It belongs to the AMP family. In terms of tissue distribution, seed specific.

The protein localises to the secreted. Functionally, possesses antifungal activity. In Phytolacca americana (American pokeweed), this protein is Antimicrobial peptide 1.